Reading from the N-terminus, the 679-residue chain is Probable metal-nicotianamine transporter YSL18 (679 aa).

Residues 1–17 (MESVGDPRDGPSTERAF) show a composition bias toward basic and acidic residues. The interval 1 to 21 (MESVGDPRDGPSTERAFEGQP) is disordered. Helical transmembrane passes span 29 to 49 (VTLRAVVASVALGVALSSVMM), 51 to 71 (LVFTSGIIPSLNISAGLLGFF), 101 to 121 (CVVACASMTYSGGFGSYLLAM), 144 to 164 (FGRMMAFFFLVSFVGLLAIVP), 211 to 231 (LASLFWSIFQWFYTGGPNCGF), 255 to 275 (VGIGMISPHLINVSMLFGSII), 309 to 329 (VFCAIAMILGDGIFQLVAISL), 379 to 399 (FAISGYVVLATVSTVVIPLMY), 407 to 427 (VAAAYAFAPVLAFCNAYGTGV), 441 to 461 (ILMFASWIGIKNGGIVGSLVI), 497 to 517 (VIGTAMGCVVNPAVFTVFHHF), 547 to 567 (LPKYCLAISATFFVLALAVCA), 593 to 613 (FLLVPAVSIDMCIGSLIVFLW), and 627 to 647 (VLASGLICGDGLFSIPYALLA).

Belongs to the YSL (TC 2.A.67.2) family.

It localises to the membrane. Functionally, may be involved in the transport of nicotianamine-chelated metals. This is Probable metal-nicotianamine transporter YSL18 (YSL18) from Oryza sativa subsp. japonica (Rice).